A 271-amino-acid polypeptide reads, in one-letter code: Formamidopyrimidine-DNA glycosylase (271 aa).

Catalysis depends on proline 2, which acts as the Schiff-base intermediate with DNA. Glutamate 3 (proton donor) is an active-site residue. Lysine 58 serves as the catalytic Proton donor; for beta-elimination activity. DNA contacts are provided by histidine 92, arginine 111, and arginine 152. Residues 237–271 (SVYGREGEACKQCGRVLKHATIGQRATVWCGSCQR) form an FPG-type zinc finger. The Proton donor; for delta-elimination activity role is filled by arginine 261.

It belongs to the FPG family. As to quaternary structure, monomer. Zn(2+) serves as cofactor.

The catalysed reaction is Hydrolysis of DNA containing ring-opened 7-methylguanine residues, releasing 2,6-diamino-4-hydroxy-5-(N-methyl)formamidopyrimidine.. It catalyses the reaction 2'-deoxyribonucleotide-(2'-deoxyribose 5'-phosphate)-2'-deoxyribonucleotide-DNA = a 3'-end 2'-deoxyribonucleotide-(2,3-dehydro-2,3-deoxyribose 5'-phosphate)-DNA + a 5'-end 5'-phospho-2'-deoxyribonucleoside-DNA + H(+). Functionally, involved in base excision repair of DNA damaged by oxidation or by mutagenic agents. Acts as a DNA glycosylase that recognizes and removes damaged bases. Has a preference for oxidized purines, such as 7,8-dihydro-8-oxoguanine (8-oxoG). Has AP (apurinic/apyrimidinic) lyase activity and introduces nicks in the DNA strand. Cleaves the DNA backbone by beta-delta elimination to generate a single-strand break at the site of the removed base with both 3'- and 5'-phosphates. The protein is Formamidopyrimidine-DNA glycosylase of Xanthomonas euvesicatoria pv. vesicatoria (strain 85-10) (Xanthomonas campestris pv. vesicatoria).